A 101-amino-acid polypeptide reads, in one-letter code: Small ribosomal subunit protein uS14 (101 aa).

Residues 1–10 (MAKKSSIEKN) show a composition bias toward basic and acidic residues. The segment at 1 to 23 (MAKKSSIEKNNRRKRMVKNAAPK) is disordered.

The protein belongs to the universal ribosomal protein uS14 family. As to quaternary structure, part of the 30S ribosomal subunit. Contacts proteins S3 and S10.

In terms of biological role, binds 16S rRNA, required for the assembly of 30S particles and may also be responsible for determining the conformation of the 16S rRNA at the A site. The chain is Small ribosomal subunit protein uS14 from Bradyrhizobium diazoefficiens (strain JCM 10833 / BCRC 13528 / IAM 13628 / NBRC 14792 / USDA 110).